We begin with the raw amino-acid sequence, 281 residues long: MKLIIISGRSGSGKSVALRALEDLGYYCVDNIPVNLLPTLTHTVVDEYDQVAVSIDVRNLPKNPDDLVEILDYLPSSWSMTIVYIDASDDVLVKRFSETRRLHPLAKLNKSLSEAIRAESALLAPIAERADLYLDTDKLTIHQLAELIRERILGKKSSRLVLVFESFGFKHGIPKDADYVFDARFLPNPHWEPDLKHLTGLDAPVEVFLGSQPVVTKFIWQIQNLITTWLPHLERNNRSYVTVAIGCTGGQHRSVYIAQTLSKTFSEIHPDVQIRHRELNQ.

8-15 (GRSGSGKS) provides a ligand contact to ATP. 56–59 (DVRN) provides a ligand contact to GTP.

This sequence belongs to the RapZ-like family.

In terms of biological role, displays ATPase and GTPase activities. In Alteromonas mediterranea (strain DSM 17117 / CIP 110805 / LMG 28347 / Deep ecotype), this protein is Nucleotide-binding protein MADE_1004170.